A 410-amino-acid chain; its full sequence is ACT domain-containing protein ACR10 (410 aa).

ACT domains follow at residues 22–105 (VITI…SESQ), 114–197 (LLKL…LVGP), and 245–324 (LIHI…VVMM).

May bind amino acids. In Arabidopsis thaliana (Mouse-ear cress), this protein is ACT domain-containing protein ACR10.